The chain runs to 518 residues: Receptor-interacting serine/threonine-protein kinase 3 (518 aa).

A Phosphoserine modification is found at Ser-2. The Protein kinase domain occupies 21-287 (LENQELVGKG…ECLPKTDEVF (267 aa)). Position 27–35 (27–35 (VGKGGFGTV)) interacts with ATP. Lys-42 participates in a covalent cross-link: Glycyl lysine isopeptide (Lys-Gly) (interchain with G-Cter in ubiquitin). An ATP-binding site is contributed by Lys-50. Residue Asp-142 is the Proton acceptor of the active site. Ser-164 carries the post-translational modification Phosphoserine. Phosphothreonine is present on Thr-182. Ser-199 and Ser-227 each carry phosphoserine; by autocatalysis. Phosphothreonine is present on Thr-252. Position 299 is a phosphoserine (Ser-299). Thr-333 carries the phosphothreonine modification. Residues Lys-351 and Lys-363 each participate in a glycyl lysine isopeptide (Lys-Gly) (interchain with G-Cter in ubiquitin) cross-link. A disordered region spans residues 355–443 (EEPPSSVPKK…WSCRTPEPNP (89 aa)). A compositionally biased stretch (polar residues) spans 384–408 (TAGTSSDSMAQPPQTPETSTFRNQM). Phosphoserine is present on Ser-389. A Phosphothreonine modification is found at Thr-401. An RIP homotypic interaction motif (RHIM) motif is present at residues 450 to 466 (VNIYNCSGVQVGDNNYL). The disordered stretch occupies residues 476 to 518 (TWGLAPSGKGRGLQHPPPVGSQEGPKDPEAWSRPQGWYNHSGK). Lys-518 is covalently cross-linked (Glycyl lysine isopeptide (Lys-Gly) (interchain with G-Cter in ubiquitin)).

It belongs to the protein kinase superfamily. TKL Ser/Thr protein kinase family. As to quaternary structure, interacts (via RIP homotypic interaction motif) with RIPK1 (via RIP homotypic interaction motif); this interaction induces RIPK1 phosphorylation and formation of a RIPK1-RIPK3 necrosis-inducing complex. Interacts with MLKL; the interaction is direct and triggers necroptosis. Interacts with ZBP1 (via RIP homotypic interaction motif); interaction with ZBP1 activates RIPK3, triggering necroptosis. Upon TNF-induced necrosis, the RIPK1-RIPK3 dimer further interacts with PGAM5 and MLKL; the formation of this complex leads to PGAM5 phosphorylation and increase in PGAM5 phosphatase activity. Binds TRAF2 and is recruited to the TNFR-1 signaling complex. Interacts with PYGL, GLUL and GLUD1; these interactions result in activation of these metabolic enzymes. Interacts with BIRC2/c-IAP1, BIRC3/c-IAP2 and XIAP/BIRC4. Interacts with ARHGEF2. Interacts with PELI1 (via atypical FHA domain); the phosphorylated form at Thr-182 binds preferentially to PELI1. Interacts with BUB1B, TRAF2 and STUB1. Interacts with CASP6. Component of the AIM2 PANoptosome complex, a multiprotein complex that drives inflammatory cell death (PANoptosis). (Microbial infection) Interacts (via RIP homotypic interaction motif/RHIM) with herpes simplex virus 1/HHV-1 protein RIR1/ICP6 (via RHIM); this interaction may induce heteromeric amyloid assemblies and prevent necroptosis activation. In terms of assembly, (Microbial infection) Interacts (via RIP homotypic interaction motif/RHIM) with herpes simplex virus 2/HHV-2 protein RIR1/ICP10 (via RHIM); this interaction prevents necroptosis activation. In terms of processing, (Microbial infection) Proteolytically cleaved by S.flexneri OspD3 within the RIP homotypic interaction motif (RHIM), leading to its degradation and inhibition of necroptosis. RIPK1 and RIPK3 undergo reciprocal auto- and trans-phosphorylation. Autophosphorylated following interaction with ZBP1. Phosphorylation of Ser-199 plays a role in the necroptotic function of RIPK3. Autophosphorylates at Ser-227 following activation by ZBP1: phosphorylation at these sites is a hallmark of necroptosis and is required for binding MLKL. Phosphorylation at Thr-182 is important for its kinase activity, interaction with PELI1 and PELI1-mediated 'Lys-48'-linked polyubiquitination and for its ability to mediate TNF-induced necroptosis. Post-translationally, polyubiquitinated with 'Lys-48' and 'Lys-63'-linked chains by BIRC2/c-IAP1 and BIRC3/c-IAP2, leading to activation of NF-kappa-B. Polyubiquitinated with 'Lys-48'-linked chains by PELI1 leading to its subsequent proteasome-dependent degradation. Ubiquitinated by STUB1 leading to its subsequent proteasome-dependent degradation. Deubiquitinated by USP22. Highly expressed in the pancreas. Detected at lower levels in heart, placenta, lung and kidney. As to expression, expression is significantly increased in colon and lung cancers.

It is found in the cytoplasm. Its subcellular location is the cytosol. The protein localises to the nucleus. The catalysed reaction is L-seryl-[protein] + ATP = O-phospho-L-seryl-[protein] + ADP + H(+). It catalyses the reaction L-threonyl-[protein] + ATP = O-phospho-L-threonyl-[protein] + ADP + H(+). Activity is stimulated by ZBP1, which senses double-stranded Z-RNA structures. RIPK3-dependent necroptosis is inhibited by RIPK1: RIPK1 prevents the ZBP1-induced activation of RIPK3 via FADD-mediated recruitment of CASP8, which cleaves RIPK1 and limits TNF-induced necroptosis. Its function is as follows. Serine/threonine-protein kinase that activates necroptosis and apoptosis, two parallel forms of cell death. Necroptosis, a programmed cell death process in response to death-inducing TNF-alpha family members, is triggered by RIPK3 following activation by ZBP1. Activated RIPK3 forms a necrosis-inducing complex and mediates phosphorylation of MLKL, promoting MLKL localization to the plasma membrane and execution of programmed necrosis characterized by calcium influx and plasma membrane damage. In addition to TNF-induced necroptosis, necroptosis can also take place in the nucleus in response to orthomyxoviruses infection: following ZBP1 activation, which senses double-stranded Z-RNA structures, nuclear RIPK3 catalyzes phosphorylation and activation of MLKL, promoting disruption of the nuclear envelope and leakage of cellular DNA into the cytosol. Also regulates apoptosis: apoptosis depends on RIPK1, FADD and CASP8, and is independent of MLKL and RIPK3 kinase activity. Phosphorylates RIPK1: RIPK1 and RIPK3 undergo reciprocal auto- and trans-phosphorylation. In some cell types, also able to restrict viral replication by promoting cell death-independent responses. In response to Zika virus infection in neurons, promotes a cell death-independent pathway that restricts viral replication: together with ZBP1, promotes a death-independent transcriptional program that modifies the cellular metabolism via up-regulation expression of the enzyme ACOD1/IRG1 and production of the metabolite itaconate. Itaconate inhibits the activity of succinate dehydrogenase, generating a metabolic state in neurons that suppresses replication of viral genomes. RIPK3 binds to and enhances the activity of three metabolic enzymes: GLUL, GLUD1, and PYGL. These metabolic enzymes may eventually stimulate the tricarboxylic acid cycle and oxidative phosphorylation, which could result in enhanced ROS production. In terms of biological role, (Microbial infection) In case of herpes simplex virus 1/HHV-1 infection, forms heteromeric amyloid structures with HHV-1 protein RIR1/ICP6 which may inhibit RIPK3-mediated necroptosis, thereby preventing host cell death pathway and allowing viral evasion. This is Receptor-interacting serine/threonine-protein kinase 3 from Homo sapiens (Human).